The primary structure comprises 169 residues: Endoribonuclease YbeY (169 aa).

Zn(2+)-binding residues include H117, H121, and H127.

The protein belongs to the endoribonuclease YbeY family. It depends on Zn(2+) as a cofactor.

It localises to the cytoplasm. In terms of biological role, single strand-specific metallo-endoribonuclease involved in late-stage 70S ribosome quality control and in maturation of the 3' terminus of the 16S rRNA. The polypeptide is Endoribonuclease YbeY (Mesoplasma florum (strain ATCC 33453 / NBRC 100688 / NCTC 11704 / L1) (Acholeplasma florum)).